Here is a 196-residue protein sequence, read N- to C-terminus: Peptide methionine sulfoxide reductase MsrA 2 (196 aa).

C36 is an active-site residue.

It belongs to the MsrA Met sulfoxide reductase family.

The enzyme catalyses L-methionyl-[protein] + [thioredoxin]-disulfide + H2O = L-methionyl-(S)-S-oxide-[protein] + [thioredoxin]-dithiol. The catalysed reaction is [thioredoxin]-disulfide + L-methionine + H2O = L-methionine (S)-S-oxide + [thioredoxin]-dithiol. Has an important function as a repair enzyme for proteins that have been inactivated by oxidation. Catalyzes the reversible oxidation-reduction of methionine sulfoxide in proteins to methionine. This Caulobacter vibrioides (strain ATCC 19089 / CIP 103742 / CB 15) (Caulobacter crescentus) protein is Peptide methionine sulfoxide reductase MsrA 2 (msrA2).